A 164-amino-acid chain; its full sequence is MSQSICSTGLRWLWLVVVVLIIDLGSKYLILQNFALGDTVPLFPSLNLHYARNYGAAFSFLADSGGWQRWFFAGIAIGISVILAVMMYRSKATQKLNNIAYALIIGGALGNLFDRLWHGFVVDMIDFYVGDWHFATFNLADTAICVGAALIVLEGFLPSRAKKQ.

The next 3 helical transmembrane spans lie at 12–32 (WLWL…LILQ), 70–90 (WFFA…MYRS), and 102–122 (ALII…GFVV). Residues Asp123 and Asp141 contribute to the active site. A helical transmembrane segment spans residues 137–157 (FNLADTAICVGAALIVLEGFL).

The protein belongs to the peptidase A8 family.

The protein resides in the cell inner membrane. The enzyme catalyses Release of signal peptides from bacterial membrane prolipoproteins. Hydrolyzes -Xaa-Yaa-Zaa-|-(S,diacylglyceryl)Cys-, in which Xaa is hydrophobic (preferably Leu), and Yaa (Ala or Ser) and Zaa (Gly or Ala) have small, neutral side chains.. Its pathway is protein modification; lipoprotein biosynthesis (signal peptide cleavage). Its function is as follows. This protein specifically catalyzes the removal of signal peptides from prolipoproteins. This Shigella sonnei (strain Ss046) protein is Lipoprotein signal peptidase.